The chain runs to 548 residues: Glucose-6-phosphate isomerase (548 aa).

Residue Glu-355 is the Proton donor of the active site. Residues His-386 and Lys-514 contribute to the active site.

It belongs to the GPI family.

The protein localises to the cytoplasm. It carries out the reaction alpha-D-glucose 6-phosphate = beta-D-fructose 6-phosphate. It functions in the pathway carbohydrate biosynthesis; gluconeogenesis. It participates in carbohydrate degradation; glycolysis; D-glyceraldehyde 3-phosphate and glycerone phosphate from D-glucose: step 2/4. Its function is as follows. Catalyzes the reversible isomerization of glucose-6-phosphate to fructose-6-phosphate. The chain is Glucose-6-phosphate isomerase from Yersinia pestis (strain Pestoides F).